Here is a 225-residue protein sequence, read N- to C-terminus: MAGHDSGNARRGRASFGAFVRKPVERDSVANAGQAAEPGSPEATQAWPDDAVEVGAVVDAYGLKGWVKVATHADAGRGGDALLNARRWWLERGAERLSVRIMQSKTHSDTVVAQPAGVSDRDAALSMRGFRVFVRREDFPALAADEFYWVDLIGLEVVNEQSVALGKVSGMIDNGVHSIMRVEYPATGKDGQPTTDERLIPFVGVYVKTVDQAARRIVVDWEADY.

The PRC barrel domain maps to 144–225 (ADEFYWVDLI…RIVVDWEADY (82 aa)).

This sequence belongs to the RimM family. As to quaternary structure, binds ribosomal protein uS19.

It is found in the cytoplasm. Functionally, an accessory protein needed during the final step in the assembly of 30S ribosomal subunit, possibly for assembly of the head region. Essential for efficient processing of 16S rRNA. May be needed both before and after RbfA during the maturation of 16S rRNA. It has affinity for free ribosomal 30S subunits but not for 70S ribosomes. The polypeptide is Ribosome maturation factor RimM (Burkholderia orbicola (strain MC0-3)).